We begin with the raw amino-acid sequence, 124 residues long: Small ribosomal subunit protein uS12 (124 aa).

Residues 1–22 are disordered; that stretch reads MATINQLVRKPRSRKVAKSDVP. A 3-methylthioaspartic acid modification is found at D89. A disordered region spans residues 104 to 124; the sequence is TAGVNDRRQGRSKYGAKRGKS. Residues 113–124 show a composition bias toward basic residues; that stretch reads GRSKYGAKRGKS.

It belongs to the universal ribosomal protein uS12 family. As to quaternary structure, part of the 30S ribosomal subunit. Contacts proteins S8 and S17. May interact with IF1 in the 30S initiation complex.

In terms of biological role, with S4 and S5 plays an important role in translational accuracy. Its function is as follows. Interacts with and stabilizes bases of the 16S rRNA that are involved in tRNA selection in the A site and with the mRNA backbone. Located at the interface of the 30S and 50S subunits, it traverses the body of the 30S subunit contacting proteins on the other side and probably holding the rRNA structure together. The combined cluster of proteins S8, S12 and S17 appears to hold together the shoulder and platform of the 30S subunit. The chain is Small ribosomal subunit protein uS12 from Hahella chejuensis (strain KCTC 2396).